A 416-amino-acid polypeptide reads, in one-letter code: Peptide chain release factor subunit 1 (416 aa).

This sequence belongs to the eukaryotic release factor 1 family. In terms of assembly, heterodimer of two subunits, one of which binds GTP.

It localises to the cytoplasm. Directs the termination of nascent peptide synthesis (translation) in response to the termination codons UAA, UAG and UGA. The chain is Peptide chain release factor subunit 1 from Halobacterium salinarum (strain ATCC 29341 / DSM 671 / R1).